Here is a 305-residue protein sequence, read N- to C-terminus: Protoheme IX farnesyltransferase 1 (305 aa).

The next 8 membrane-spanning stretches (helical) occupy residues 22-42, 53-73, 94-114, 115-135, 154-174, 179-199, 230-250, and 283-303; these read IKTG…TLAL, IPEI…AGAF, VTGD…TIFG, LVFL…GLFL, IGSV…YPDV, IIGL…AIAI, LVIL…LMLV, and LFHM…GIFF.

It belongs to the UbiA prenyltransferase family. Protoheme IX farnesyltransferase subfamily. Interacts with CtaA.

It is found in the cell membrane. It catalyses the reaction heme b + (2E,6E)-farnesyl diphosphate + H2O = Fe(II)-heme o + diphosphate. The protein operates within porphyrin-containing compound metabolism; heme O biosynthesis; heme O from protoheme: step 1/1. Its function is as follows. Converts heme B (protoheme IX) to heme O by substitution of the vinyl group on carbon 2 of heme B porphyrin ring with a hydroxyethyl farnesyl side group. This is Protoheme IX farnesyltransferase 1 from Bacillus cytotoxicus (strain DSM 22905 / CIP 110041 / 391-98 / NVH 391-98).